The following is a 412-amino-acid chain: NAD-dependent dihydropyrimidine dehydrogenase subunit PreT (412 aa).

Position 286 (glutamate 286) interacts with NAD(+).

The protein belongs to the NADH dehydrogenase family. Heterotetramer of 2 PreA and 2 PreT subunits.

It catalyses the reaction 5,6-dihydrouracil + NAD(+) = uracil + NADH + H(+). The enzyme catalyses 5,6-dihydrothymine + NAD(+) = thymine + NADH + H(+). In terms of biological role, involved in pyrimidine base degradation. Catalyzes physiologically the reduction of uracil to 5,6-dihydrouracil (DHU) by using NADH as a specific cosubstrate. It also catalyzes the reverse reaction and the reduction of thymine to 5,6-dihydrothymine (DHT). The protein is NAD-dependent dihydropyrimidine dehydrogenase subunit PreT (preT) of Escherichia coli (strain K12).